A 252-amino-acid chain; its full sequence is Imidazole glycerol phosphate synthase subunit HisF (252 aa).

Active-site residues include Asp11 and Asp130.

Belongs to the HisA/HisF family. As to quaternary structure, heterodimer of HisH and HisF.

Its subcellular location is the cytoplasm. It carries out the reaction 5-[(5-phospho-1-deoxy-D-ribulos-1-ylimino)methylamino]-1-(5-phospho-beta-D-ribosyl)imidazole-4-carboxamide + L-glutamine = D-erythro-1-(imidazol-4-yl)glycerol 3-phosphate + 5-amino-1-(5-phospho-beta-D-ribosyl)imidazole-4-carboxamide + L-glutamate + H(+). Its pathway is amino-acid biosynthesis; L-histidine biosynthesis; L-histidine from 5-phospho-alpha-D-ribose 1-diphosphate: step 5/9. Functionally, IGPS catalyzes the conversion of PRFAR and glutamine to IGP, AICAR and glutamate. The HisF subunit catalyzes the cyclization activity that produces IGP and AICAR from PRFAR using the ammonia provided by the HisH subunit. The chain is Imidazole glycerol phosphate synthase subunit HisF from Bacillus anthracis (strain CDC 684 / NRRL 3495).